The chain runs to 185 residues: Elongation factor P 1 (185 aa).

This sequence belongs to the elongation factor P family.

The protein resides in the cytoplasm. The protein operates within protein biosynthesis; polypeptide chain elongation. In terms of biological role, involved in peptide bond synthesis. Stimulates efficient translation and peptide-bond synthesis on native or reconstituted 70S ribosomes in vitro. Probably functions indirectly by altering the affinity of the ribosome for aminoacyl-tRNA, thus increasing their reactivity as acceptors for peptidyl transferase. The chain is Elongation factor P 1 (efp1) from Chlamydia caviae (strain ATCC VR-813 / DSM 19441 / 03DC25 / GPIC) (Chlamydophila caviae).